A 548-amino-acid chain; its full sequence is Glutamyl-tRNA(Gln) amidotransferase subunit B, chloroplastic/mitochondrial (548 aa).

This sequence belongs to the GatB/GatE family. GatB subfamily. Subunit of the heterotrimeric GatCAB amidotransferase (AdT) complex, composed of A, B and C subunits.

The protein resides in the mitochondrion. It localises to the plastid. Its subcellular location is the chloroplast. It catalyses the reaction L-glutamyl-tRNA(Gln) + L-glutamine + ATP + H2O = L-glutaminyl-tRNA(Gln) + L-glutamate + ADP + phosphate + H(+). Allows the formation of correctly charged Gln-tRNA(Gln) through the transamidation of misacylated Glu-tRNA(Gln) in chloroplasts and mitochondria. The reaction takes place in the presence of glutamine and ATP through an activated gamma-phospho-Glu-tRNA(Gln). This Sorghum bicolor (Sorghum) protein is Glutamyl-tRNA(Gln) amidotransferase subunit B, chloroplastic/mitochondrial.